The sequence spans 300 residues: Ribosomal RNA small subunit methyltransferase H (300 aa).

Residues 38 to 40, Glu-55, Ile-85, Asp-102, and His-109 each bind S-adenosyl-L-methionine; that span reads GGH.

This sequence belongs to the methyltransferase superfamily. RsmH family.

The protein localises to the cytoplasm. It catalyses the reaction cytidine(1402) in 16S rRNA + S-adenosyl-L-methionine = N(4)-methylcytidine(1402) in 16S rRNA + S-adenosyl-L-homocysteine + H(+). Specifically methylates the N4 position of cytidine in position 1402 (C1402) of 16S rRNA. In Brachyspira hyodysenteriae (strain ATCC 49526 / WA1), this protein is Ribosomal RNA small subunit methyltransferase H.